The chain runs to 516 residues: Bifunctional pantoate ligase/cytidylate kinase (516 aa).

The pantoate--beta-alanine ligase stretch occupies residues 1–279; it reads MVRKIFQTNA…CGSTRLIDHT (279 aa). 29–36 lines the ATP pocket; it reads MGGLHPGH. His36 functions as the Proton donor in the catalytic mechanism. Gln64 serves as a coordination point for (R)-pantoate. Residue Gln64 participates in beta-alanine binding. 153-156 is an ATP binding site; that stretch reads GEKD. Gln159 is a binding site for (R)-pantoate. Position 190–193 (190–193) interacts with ATP; it reads YSSR. The segment at 280-516 is cytidylate kinase; sequence FLMHRKPIIA…PEEVWPTPNS (237 aa).

It in the N-terminal section; belongs to the pantothenate synthetase family. This sequence in the C-terminal section; belongs to the cytidylate kinase family. Type 1 subfamily.

Its subcellular location is the cytoplasm. The enzyme catalyses (R)-pantoate + beta-alanine + ATP = (R)-pantothenate + AMP + diphosphate + H(+). It catalyses the reaction CMP + ATP = CDP + ADP. The catalysed reaction is dCMP + ATP = dCDP + ADP. It functions in the pathway cofactor biosynthesis; (R)-pantothenate biosynthesis; (R)-pantothenate from (R)-pantoate and beta-alanine: step 1/1. In terms of biological role, catalyzes the condensation of pantoate with beta-alanine in an ATP-dependent reaction via a pantoyl-adenylate intermediate. Functionally, catalyzes the transfer of a phosphate group from ATP to either CMP or dCMP to form CDP or dCDP and ADP, respectively. This Prochlorococcus marinus (strain NATL1A) protein is Bifunctional pantoate ligase/cytidylate kinase.